The chain runs to 775 residues: Kinesin-like protein KIF3B (775 aa).

Positions S9–I341 constitute a Kinesin motor domain. G97–T104 contributes to the ATP binding site. The segment at K372–I419 is disordered. Basic residues predominate over residues S374–R385. The segment covering G389–V413 has biased composition (acidic residues). Positions L501–L591 form a coiled coil. The segment at F716–K775 is disordered. Positions A718–S734 are enriched in low complexity. The segment covering K735–K746 has biased composition (basic residues). The span at S756–L765 shows a compositional bias: low complexity.

This sequence belongs to the TRAFAC class myosin-kinesin ATPase superfamily. Kinesin family. As to quaternary structure, heterodimer of KIF3A and KIF3B. KIF3A/KIF3B heterodimer interacts with KIFAP3 forming a heterotrimeric (KIF3A/KIF3B/KIFAP3) complex.

It localises to the cytoplasm. The protein localises to the cytoskeleton. It is found in the cell projection. The protein resides in the cilium. Its subcellular location is the dendritic spine. Functionally, microtubule-based molecular motor that transport intracellular cargos, such as vesicles, organelles and protein complexes. Uses ATP hydrolysis to generate force to bind and move along the microtubule. Plays a role in cilia formation. Required for photoreceptor development. This chain is Kinesin-like protein KIF3B, found in Danio rerio (Zebrafish).